The following is a 141-amino-acid chain: MSIVIGADAAGLRLKEVVKNFLEKENFHLVDVTAEGQDFVDVTLAVAAEVNKEEQNLGIVIDAYGAGPFMVATKIKGMVAAEVSDERSAYMTRGHNNSRMITMGAQLVGDELAKNIAKGFVNGKYDGGRHQIRVDMLNKMG.

The protein belongs to the LacAB/RpiB family. Heteromultimeric protein consisting of LacA and LacB.

It catalyses the reaction aldehydo-D-galactose 6-phosphate = keto-D-tagatose 6-phosphate. It participates in carbohydrate metabolism; D-galactose 6-phosphate degradation; D-tagatose 6-phosphate from D-galactose 6-phosphate: step 1/1. This chain is Galactose-6-phosphate isomerase subunit LacA, found in Streptococcus pneumoniae (strain 70585).